A 91-amino-acid polypeptide reads, in one-letter code: Elongation factor 1-beta (91 aa).

In terms of assembly, homodimer.

Promotes the exchange of GDP for GTP in EF-1-alpha/GDP, thus allowing the regeneration of EF-1-alpha/GTP that could then be used to form the ternary complex EF-1-alpha/GTP/AAtRNA. In Saccharolobus solfataricus (strain ATCC 35092 / DSM 1617 / JCM 11322 / P2) (Sulfolobus solfataricus), this protein is Elongation factor 1-beta (ef1b).